The sequence spans 772 residues: uncharacterized protein (772 aa).

The next 2 helical transmembrane spans lie at 16 to 36 (LITF…LFSY) and 301 to 321 (IGWI…LFSW). One can recognise an HTH araC/xylS-type domain in the interval 670 to 768 (DNIIHIIHHE…GITPGNYRQQ (99 aa)). 2 consecutive DNA-binding regions (H-T-H motif) follow at residues 687–708 (DEIA…KKEM) and 735–758 (VKDI…KKLE).

The protein localises to the cell membrane. This is an uncharacterized protein from Bacillus subtilis (strain 168).